A 45-amino-acid polypeptide reads, in one-letter code: AGTAXGDLTPFQLESLREVCEVNLACEHMADTXGIVAAYTAYYGY.

The 44-residue stretch at 1–44 (AGTAXGDLTPFQLESLREVCEVNLACEHMADTXGIVAAYTAYYG) folds into the Gla domain. Residues glutamate 14, glutamate 18, glutamate 21, and glutamate 27 each contribute to the Ca(2+) site. 4-carboxyglutamate occurs at positions 14, 18, and 21. Cysteine 20 and cysteine 26 form a disulfide bridge.

It belongs to the osteocalcin/matrix Gla protein family. Post-translationally, gamma-carboxyglutamate residues are formed by vitamin K dependent carboxylation by GGCX. These residues are essential for the binding of calcium.

It is found in the secreted. In terms of biological role, the carboxylated form is one of the main organic components of the bone matrix, which constitutes 1-2% of the total bone protein. The carboxylated form binds strongly to apatite and calcium. This Danio rerio (Zebrafish) protein is Osteocalcin (bglap).